Reading from the N-terminus, the 244-residue chain is tRNA pseudouridine synthase A (244 aa).

Asp52 (nucleophile) is an active-site residue. A substrate-binding site is contributed by Tyr110.

The protein belongs to the tRNA pseudouridine synthase TruA family. As to quaternary structure, homodimer.

The enzyme catalyses uridine(38/39/40) in tRNA = pseudouridine(38/39/40) in tRNA. In terms of biological role, formation of pseudouridine at positions 38, 39 and 40 in the anticodon stem and loop of transfer RNAs. The chain is tRNA pseudouridine synthase A from Brevibacillus brevis (strain 47 / JCM 6285 / NBRC 100599).